Consider the following 294-residue polypeptide: RNA polymerase sigma-K factor (294 aa).

Residues 1-20 (MVTGVFAALGFVVKELVFLV) constitute a propeptide that is removed on maturation. Residues 1–156 (MVTGVFAALG…VNNCFFIFKS (156 aa)) form an encoded by spoIVCB region. The Polymerase core binding motif lies at 79–92 (DLISIGTIGLIKGI). The tract at residues 114-165 (EIVITKGGCIHPSLIRFNIYGVRIHNGNFFHDKVNNCFFIFKSMPPLFVMNN) is not present in recombined mature factor. Residues 157–294 (MPPLFVMNNE…KEKRKKAKGK (138 aa)) are encoded by spoIIIC. Residues 251-270 (QREIAKELGISRSYVSRIEK) constitute a DNA-binding region (H-T-H motif).

Belongs to the sigma-70 factor family.

Its function is as follows. Sigma factors are initiation factors that promote the attachment of RNA polymerase to specific initiation sites and are then released. This sigma factor is responsible for the expression of sporulation specific genes in the mother cell. The sequence is that of RNA polymerase sigma-K factor (sigK) from Bacillus subtilis (strain 168).